A 69-amino-acid chain; its full sequence is Small ribosomal subunit protein bS21 (69 aa).

Residues 50-69 (KAFKRKQAKKVRKLKQKTNR) are disordered.

Belongs to the bacterial ribosomal protein bS21 family.

In Borrelia garinii subsp. bavariensis (strain ATCC BAA-2496 / DSM 23469 / PBi) (Borreliella bavariensis), this protein is Small ribosomal subunit protein bS21.